The primary structure comprises 124 residues: Small ribosomal subunit protein uS13 (124 aa).

Residues G94 to K124 form a disordered region. The segment covering Q100–K124 has biased composition (basic residues).

It belongs to the universal ribosomal protein uS13 family. In terms of assembly, part of the 30S ribosomal subunit. Forms a loose heterodimer with protein S19. Forms two bridges to the 50S subunit in the 70S ribosome.

Located at the top of the head of the 30S subunit, it contacts several helices of the 16S rRNA. In the 70S ribosome it contacts the 23S rRNA (bridge B1a) and protein L5 of the 50S subunit (bridge B1b), connecting the 2 subunits; these bridges are implicated in subunit movement. Contacts the tRNAs in the A and P-sites. The protein is Small ribosomal subunit protein uS13 of Christiangramia forsetii (strain DSM 17595 / CGMCC 1.15422 / KT0803) (Gramella forsetii).